Reading from the N-terminus, the 499-residue chain is Ethanolamine-phosphate phospho-lyase (499 aa).

Lys-278 carries the N6-(pyridoxal phosphate)lysine modification.

This sequence belongs to the class-III pyridoxal-phosphate-dependent aminotransferase family. Homotetramer. Pyridoxal 5'-phosphate is required as a cofactor.

The protein resides in the mitochondrion. It carries out the reaction phosphoethanolamine + H2O = acetaldehyde + NH4(+) + phosphate. Catalyzes the pyridoxal-phosphate-dependent breakdown of phosphoethanolamine, converting it to ammonia, inorganic phosphate and acetaldehyde. In Mus musculus (Mouse), this protein is Ethanolamine-phosphate phospho-lyase (Etnppl).